The following is a 161-amino-acid chain: Phosphopantetheine adenylyltransferase (161 aa).

Thr9 lines the substrate pocket. Residues 9-10 and His17 contribute to the ATP site; that span reads TF. Positions 41, 73, and 87 each coordinate substrate. Residues 88-90, Glu98, and 123-129 each bind ATP; these read GLR and YQFISGT.

The protein belongs to the bacterial CoaD family. Homohexamer. The cofactor is Mg(2+).

It localises to the cytoplasm. It carries out the reaction (R)-4'-phosphopantetheine + ATP + H(+) = 3'-dephospho-CoA + diphosphate. It participates in cofactor biosynthesis; coenzyme A biosynthesis; CoA from (R)-pantothenate: step 4/5. Reversibly transfers an adenylyl group from ATP to 4'-phosphopantetheine, yielding dephospho-CoA (dPCoA) and pyrophosphate. This Cupriavidus metallidurans (strain ATCC 43123 / DSM 2839 / NBRC 102507 / CH34) (Ralstonia metallidurans) protein is Phosphopantetheine adenylyltransferase.